Reading from the N-terminus, the 1229-residue chain is MSRSSAGFADFFPTAPSVLQQKRFKVTRERPRPKAQIDSEHSDESSACPTETRAILNLSNGGASLDSGQISSTDLKKTSPESSVEGSASSTAGDRSALSLSVAQHGANSHEARLDTLTPLTNAESSPPQKANSPRNKIAEGIVANTTIDTKSGINPLHTPPTPQSQGRRTGSIRGYKLVYDPDTEKRSSSKEKRRKPRYVDIILSEQNNCPPDPRLGIPNYMRGAGCKQKRKYRPAPYTLKPWPYDASSTIGPGPPAQIVITGFDPLTPIAPISALFSSFGDIGEINNRTDPITGRFLGICSVKYKDSASFRGGGPVLAASAARRAYYECRKEQRIGTRRIRVDLDRDGVVSERFVARTIESQRMGQKSNLQSTEEVKSDSETKKNEPPPTAPKGPSGKTSVRPIVAIPEGPRANFLKPVMPSLVEEVPILGQIKRDPYIFIAHCYVPVLSTTVPHLKKRLKLFNWKDIRCDKTGYYIIFENSRRGEEETERCYKMCHMKPLFTYIMNMESQPYGNPSYERSPSPERCRAEQRERAERERLKREVGLDIEEEKRQRAVDLDPCQEVLTIIIRDLKDKLLEDVKSRIAAPALYDYLDPDRHALKRKTLGIADPEGIKRPMFRIDDSFGTPDSRSGLSDARRPFSGSTPNILALPRIRKARHLGRTDTAFLDERRKQPLRRREVRPLYHRLQQLHDVDDSDDEQRTPKDTDEQDSRPPSRMSSGTSESDDGDGFVSEALGLPVVELAGSGQNKEPDEILKDNQSVGESSQLESNEISPELRKRKRASEELEARKRQKEDDELFGINPIAEAEVEGTQIIATPIAVDINLEVSEAALSILPKESNDNRQETGEANHLDFDGIDVTSSTIEKDRRGILDPLDDIDNAAAREESRTEVGWRVSNDEPRPIVDDDDAIIMDLDGWQNLIKDDEDLHFLRDILVGYSESNVGNLSAWAWRQKEIKALNHPGDVGPLRGGTGIAGYYVPNTTGAARTEGRKRILESEKSKYLPHRIKVQKAREEREARAKNDPHTAAVEAARVAAAKNISKSTSRSTRVNNRRLIADINAQKQALPTQSGDGDVLRFNQLKKRKKPVRFARSAIHNWGLYAEENISANDMIIEYVGEKVRQQVADMRERQYLKSGIGSSYLFRIDENTVIDATKRGGIARFINHSCTPNCTAKIIKVDGSKRIVIYALRDIERDEELTYDYKFEREWDSDDRIPCLCGSTGCKGFLN.

Disordered stretches follow at residues 22–198 (KRFK…RKPR), 362–403 (SQRM…TSVR), 514–541 (YGNP…RERL), 620–656 (FRID…PRIR), 679–733 (RREV…DGFV), and 746–796 (GSGQ…RQKE). A compositionally biased stretch (basic and acidic residues) spans 26 to 44 (VTRERPRPKAQIDSEHSDE). The segment covering 57–73 (NLSNGGASLDSGQISST) has biased composition (polar residues). Positions 80–93 (PESSVEGSASSTAG) are enriched in low complexity. 3 stretches are compositionally biased toward polar residues: residues 118 to 135 (TPLT…NSPR), 144 to 153 (ANTTIDTKSG), and 362 to 374 (SQRM…LQST). 2 stretches are compositionally biased toward basic and acidic residues: residues 375–387 (EEVK…KKNE) and 523–541 (PSPE…RERL). The segment covering 691-715 (QLHDVDDSDDEQRTPKDTDEQDSRP) has biased composition (basic and acidic residues). The span at 759–774 (DNQSVGESSQLESNEI) shows a compositional bias: polar residues. Residues 784–796 (ASEELEARKRQKE) show a composition bias toward basic and acidic residues. The short motif at 1050 to 1055 (RVNNRR) is the RxxxRR motif element. The SET domain maps to 1087-1204 (KPVRFARSAI…RDEELTYDYK (118 aa)). Tyr-1203 contacts S-adenosyl-L-methionine. The 17-residue stretch at 1213-1229 (DRIPCLCGSTGCKGFLN) folds into the Post-SET domain.

Belongs to the class V-like SAM-binding methyltransferase superfamily. Component of the Set1C/COMPASS complex.

It localises to the nucleus. It is found in the chromosome. The catalysed reaction is L-lysyl(4)-[histone H3] + 3 S-adenosyl-L-methionine = N(6),N(6),N(6)-trimethyl-L-lysyl(4)-[histone H3] + 3 S-adenosyl-L-homocysteine + 3 H(+). It catalyses the reaction N(6)-methyl-L-lysyl(4)-[histone H3] + S-adenosyl-L-methionine = N(6),N(6)-dimethyl-L-lysyl(4)-[histone H3] + S-adenosyl-L-homocysteine + H(+). It carries out the reaction N(6),N(6)-dimethyl-L-lysyl(4)-[histone H3] + S-adenosyl-L-methionine = N(6),N(6),N(6)-trimethyl-L-lysyl(4)-[histone H3] + S-adenosyl-L-homocysteine + H(+). Catalytic component of the COMPASS (Set1C) complex that specifically mono-, di- and trimethylates histone H3 to form H3K4me1/2/3. Binds RNAs which might negatively affect its histone methyltransferase activity. COMPASS recognizes ubiquitinated H2B on one face of the nucleosome which stimulates the methylation of H3 on the opposing face. The polypeptide is Histone-lysine N-methyltransferase, H3 lysine-4 specific (set1) (Aspergillus oryzae (strain ATCC 42149 / RIB 40) (Yellow koji mold)).